Consider the following 118-residue polypeptide: Heavy metal-associated isoprenylated plant protein 47 (118 aa).

Residues 1–67 enclose the HMA domain; the sequence is MRIKLSVNSE…KACHVTLETL (67 aa). Cys115 carries the cysteine methyl ester modification. The S-farnesyl cysteine moiety is linked to residue Cys115. A propeptide spans 116-118 (removed in mature form); it reads LVM.

It belongs to the HIPP family.

Functionally, heavy-metal-binding protein. This Arabidopsis thaliana (Mouse-ear cress) protein is Heavy metal-associated isoprenylated plant protein 47.